The primary structure comprises 270 residues: tRNA pseudouridine synthase A (270 aa).

Aspartate 60 serves as the catalytic Nucleophile. Residue tyrosine 118 coordinates substrate.

This sequence belongs to the tRNA pseudouridine synthase TruA family. In terms of assembly, homodimer.

The enzyme catalyses uridine(38/39/40) in tRNA = pseudouridine(38/39/40) in tRNA. Functionally, formation of pseudouridine at positions 38, 39 and 40 in the anticodon stem and loop of transfer RNAs. This is tRNA pseudouridine synthase A from Salmonella arizonae (strain ATCC BAA-731 / CDC346-86 / RSK2980).